A 360-amino-acid polypeptide reads, in one-letter code: Phospho-N-acetylmuramoyl-pentapeptide-transferase (360 aa).

10 helical membrane-spanning segments follow: residues 21-41, 73-93, 94-114, 132-152, 168-188, 199-219, 239-259, 263-283, 288-308, and 338-358; these read YLSF…LWMG, TMGG…WADL, TNPY…VGFV, WKYF…YAHG, VMPQ…VGTS, GLAI…AWAT, LVVV…FNTY, VFMG…IAVL, FVLV…ILQV, and VIVR…ATLK.

It belongs to the glycosyltransferase 4 family. MraY subfamily. The cofactor is Mg(2+).

It is found in the cell inner membrane. The catalysed reaction is UDP-N-acetyl-alpha-D-muramoyl-L-alanyl-gamma-D-glutamyl-meso-2,6-diaminopimeloyl-D-alanyl-D-alanine + di-trans,octa-cis-undecaprenyl phosphate = di-trans,octa-cis-undecaprenyl diphospho-N-acetyl-alpha-D-muramoyl-L-alanyl-D-glutamyl-meso-2,6-diaminopimeloyl-D-alanyl-D-alanine + UMP. It functions in the pathway cell wall biogenesis; peptidoglycan biosynthesis. Its function is as follows. Catalyzes the initial step of the lipid cycle reactions in the biosynthesis of the cell wall peptidoglycan: transfers peptidoglycan precursor phospho-MurNAc-pentapeptide from UDP-MurNAc-pentapeptide onto the lipid carrier undecaprenyl phosphate, yielding undecaprenyl-pyrophosphoryl-MurNAc-pentapeptide, known as lipid I. The chain is Phospho-N-acetylmuramoyl-pentapeptide-transferase from Vibrio cholerae serotype O1 (strain ATCC 39541 / Classical Ogawa 395 / O395).